Here is a 492-residue protein sequence, read N- to C-terminus: Cobyric acid synthase (492 aa).

Positions 259–453 (HTTVAVVAYP…LHGLFEDAVA (195 aa)) constitute a GATase cobBQ-type domain. The active-site Nucleophile is the Cys-340. His-445 is an active-site residue.

It belongs to the CobB/CobQ family. CobQ subfamily.

Its pathway is cofactor biosynthesis; adenosylcobalamin biosynthesis. Functionally, catalyzes amidations at positions B, D, E, and G on adenosylcobyrinic A,C-diamide. NH(2) groups are provided by glutamine, and one molecule of ATP is hydrogenolyzed for each amidation. This chain is Cobyric acid synthase, found in Paracidovorax citrulli (strain AAC00-1) (Acidovorax citrulli).